The sequence spans 99 residues: MEIIEIIKEFKKDISTILKDKLDRVILFGSYARGDYDEESDVDVLILVKEMPTLKEKQKIIKIASRYSLKYDILISPIIYKKTIKTSFIDEVENYGVEV.

The GSX(10)DXD motif signature appears at 29-43; it reads GSYARGDYDEESDVD. Residues aspartate 41 and aspartate 43 each contribute to the Mg(2+) site.

The protein belongs to the MntA antitoxin family. The cofactor is Mg(2+).

It catalyses the reaction L-tyrosyl-[protein] + ATP = O-(5'-adenylyl)-L-tyrosyl-[protein] + diphosphate. The catalysed reaction is O-(5'-adenylyl)-L-tyrosyl-[protein] + ATP = O-[5'-(adenylyl-(5'-&gt;3')-adenylyl)]-L-tyrosyl-[protein] + diphosphate. In terms of biological role, putative antitoxin component of a putative type VII toxin-antitoxin (TA) system. Its cognate toxin might be MF0142, which it might AMPylate. This Methanocaldococcus jannaschii (strain ATCC 43067 / DSM 2661 / JAL-1 / JCM 10045 / NBRC 100440) (Methanococcus jannaschii) protein is Putative protein adenylyltransferase MJ0141.